Consider the following 678-residue polypeptide: DNA ligase (678 aa).

Residues 47–51 (DSDYD), 96–97 (SL), and Glu-122 contribute to the NAD(+) site. Residue Lys-124 is the N6-AMP-lysine intermediate of the active site. Residues Arg-145, Glu-182, Lys-300, and Lys-324 each contribute to the NAD(+) site. The Zn(2+) site is built by Cys-418, Cys-421, Cys-436, and Cys-442. Positions 602 to 678 (AYNESFTGKT…ILEDNLKDLL (77 aa)) constitute a BRCT domain.

It belongs to the NAD-dependent DNA ligase family. LigA subfamily. Requires Mg(2+) as cofactor. Mn(2+) is required as a cofactor.

The catalysed reaction is NAD(+) + (deoxyribonucleotide)n-3'-hydroxyl + 5'-phospho-(deoxyribonucleotide)m = (deoxyribonucleotide)n+m + AMP + beta-nicotinamide D-nucleotide.. DNA ligase that catalyzes the formation of phosphodiester linkages between 5'-phosphoryl and 3'-hydroxyl groups in double-stranded DNA using NAD as a coenzyme and as the energy source for the reaction. It is essential for DNA replication and repair of damaged DNA. The sequence is that of DNA ligase from Francisella tularensis subsp. holarctica (strain FTNF002-00 / FTA).